Consider the following 280-residue polypeptide: 2,3,4,5-tetrahydropyridine-2,6-dicarboxylate N-succinyltransferase (280 aa).

Belongs to the transferase hexapeptide repeat family.

The protein localises to the cytoplasm. It carries out the reaction (S)-2,3,4,5-tetrahydrodipicolinate + succinyl-CoA + H2O = (S)-2-succinylamino-6-oxoheptanedioate + CoA. It participates in amino-acid biosynthesis; L-lysine biosynthesis via DAP pathway; LL-2,6-diaminopimelate from (S)-tetrahydrodipicolinate (succinylase route): step 1/3. The sequence is that of 2,3,4,5-tetrahydropyridine-2,6-dicarboxylate N-succinyltransferase from Methylorubrum populi (strain ATCC BAA-705 / NCIMB 13946 / BJ001) (Methylobacterium populi).